Consider the following 340-residue polypeptide: Adenosine deaminase (340 aa).

Zn(2+) contacts are provided by H15 and H17. H17, D19, and G172 together coordinate substrate. H199 contributes to the Zn(2+) binding site. Residue E202 is the Proton donor of the active site. D279 is a binding site for Zn(2+).

Belongs to the metallo-dependent hydrolases superfamily. Adenosine and AMP deaminases family. Adenosine deaminase subfamily. It depends on Zn(2+) as a cofactor.

The enzyme catalyses adenosine + H2O + H(+) = inosine + NH4(+). It catalyses the reaction 2'-deoxyadenosine + H2O + H(+) = 2'-deoxyinosine + NH4(+). Its function is as follows. Catalyzes the hydrolytic deamination of adenosine and 2-deoxyadenosine. The chain is Adenosine deaminase from Streptococcus agalactiae serotype Ia (strain ATCC 27591 / A909 / CDC SS700).